We begin with the raw amino-acid sequence, 550 residues long: NAD(P)H-quinone oxidoreductase chain 4 3 (550 aa).

Transmembrane regions (helical) follow at residues 5–25 (FPWLTAIIALPALSTLLIPLL), 36–56 (YALIVGLVDFALMCFAFWQHF), 86–106 (ISAPLVLLAGFVTTLAMFSAW), 114–134 (LFYALMLLLYSAQIGVFVAKD), 135–155 (LFLFFLMWEIELIPVYLLVCI), 168–188 (FLLYTAAASIFILVAALALSL), 212–232 (MWLYAGLLVSFGVKLAIFPLH), 243–263 (SSPVSMLLAGVLLKMGGYGLM), 277–297 (FAPLLVILGVVNIVYGAFSSF), 311–331 (VSHMGFVLIGIASFTDLGING), 332–352 (AMLQMLSHGLIASVLFFLAGV), 375–395 (VFAMFTVGALASLALPGMSGF), 418–438 (ITVFLAAVGVILTPIYLLSML), and 489–509 (IFIATCFTVLIIGVGLYPKLL).

It belongs to the complex I subunit 4 family.

The protein resides in the cellular thylakoid membrane. It catalyses the reaction a plastoquinone + NADH + (n+1) H(+)(in) = a plastoquinol + NAD(+) + n H(+)(out). The enzyme catalyses a plastoquinone + NADPH + (n+1) H(+)(in) = a plastoquinol + NADP(+) + n H(+)(out). Its function is as follows. NDH-1 shuttles electrons from NAD(P)H, via FMN and iron-sulfur (Fe-S) centers, to quinones in the respiratory chain. The immediate electron acceptor for the enzyme in this species is believed to be plastoquinone. Couples the redox reaction to proton translocation (for every two electrons transferred, four hydrogen ions are translocated across the cytoplasmic membrane), and thus conserves the redox energy in a proton gradient. The sequence is that of NAD(P)H-quinone oxidoreductase chain 4 3 from Picosynechococcus sp. (strain ATCC 27264 / PCC 7002 / PR-6) (Agmenellum quadruplicatum).